A 288-amino-acid chain; its full sequence is Protease HtpX (288 aa).

The next 2 membrane-spanning stretches (helical) occupy residues 4–24 (ILLF…ILTL) and 33–53 (VGLL…SLLM). Histidine 139 provides a ligand contact to Zn(2+). Glutamate 140 is a catalytic residue. Histidine 143 is a binding site for Zn(2+). 2 helical membrane-spanning segments follow: residues 146–166 (SGDM…VIFI) and 186–206 (IYFM…SMIA). Residue glutamate 214 coordinates Zn(2+).

The protein belongs to the peptidase M48B family. Requires Zn(2+) as cofactor.

The protein resides in the cell inner membrane. This is Protease HtpX from Histophilus somni (strain 2336) (Haemophilus somnus).